A 1161-amino-acid chain; its full sequence is Translation initiation factor IF-2 (1161 aa).

Residues 67–561 (KSSFKAANEQ…RRAMELRAAK (495 aa)) form a disordered region. Residues 83-105 (QNKDSNSRSKPLNKEKPSKESLN) show a composition bias toward basic and acidic residues. A compositionally biased stretch (polar residues) spans 139-154 (SRISNLQSQVLPNSHN). 2 stretches are compositionally biased toward basic and acidic residues: residues 164-180 (NPNE…EKKS) and 211-220 (KDIKANKKND). 2 stretches are compositionally biased toward low complexity: residues 224–250 (NQRP…PRIK) and 268–282 (NSNR…PPSN). Composition is skewed to polar residues over residues 295–311 (RQVT…QGVS), 352–362 (RQGAPNRQGSP), and 380–393 (LNRS…QNPS). A compositionally biased stretch (basic and acidic residues) spans 412–432 (ASDKEKLNRSNFEKQKVEPPK). Over residues 440–461 (SRLNASPTAKKTPHRSFTNNSK) the composition is skewed to polar residues. 2 stretches are compositionally biased toward basic and acidic residues: residues 464-478 (GRSD…EALR) and 543-561 (KETT…RAAK). Residues 653–830 (KRPPVITVMG…EVEDLQANPE (178 aa)) enclose the tr-type G domain. The segment at 662–669 (GHVDHGKT) is G1. 662 to 669 (GHVDHGKT) contacts GTP. Residues 687–691 (GITQH) form a G2 region. The interval 712-715 (DTPG) is G3. Residues 712–716 (DTPGH) and 766–769 (NKID) each bind GTP. The tract at residues 766–769 (NKID) is G4. Residues 802–804 (SAI) form a G5 region.

This sequence belongs to the TRAFAC class translation factor GTPase superfamily. Classic translation factor GTPase family. IF-2 subfamily.

The protein localises to the cytoplasm. Functionally, one of the essential components for the initiation of protein synthesis. Protects formylmethionyl-tRNA from spontaneous hydrolysis and promotes its binding to the 30S ribosomal subunits. Also involved in the hydrolysis of GTP during the formation of the 70S ribosomal complex. This Prochlorococcus marinus (strain MIT 9515) protein is Translation initiation factor IF-2.